A 213-amino-acid chain; its full sequence is ATP phosphoribosyltransferase (213 aa).

This sequence belongs to the ATP phosphoribosyltransferase family. Short subfamily. As to quaternary structure, heteromultimer composed of HisG and HisZ subunits.

It localises to the cytoplasm. It catalyses the reaction 1-(5-phospho-beta-D-ribosyl)-ATP + diphosphate = 5-phospho-alpha-D-ribose 1-diphosphate + ATP. It functions in the pathway amino-acid biosynthesis; L-histidine biosynthesis; L-histidine from 5-phospho-alpha-D-ribose 1-diphosphate: step 1/9. Catalyzes the condensation of ATP and 5-phosphoribose 1-diphosphate to form N'-(5'-phosphoribosyl)-ATP (PR-ATP). Has a crucial role in the pathway because the rate of histidine biosynthesis seems to be controlled primarily by regulation of HisG enzymatic activity. The polypeptide is ATP phosphoribosyltransferase (Bacillus pumilus (strain SAFR-032)).